The primary structure comprises 350 residues: Secreted effector protein PipB2 (350 aa).

Pentapeptide repeat domains follow at residues Ala-162 to Gly-201, Thr-202 to Gly-241, Cys-247 to Asp-286, and Ala-287 to His-326.

Interacts with the host kinesin light chain (KLC), a subunit of the kinesin-1 motor complex.

It is found in the secreted. Its subcellular location is the host membrane. In terms of biological role, effector proteins function to alter host cell physiology and promote bacterial survival in host tissues. Involved in the reorganization of late endosome/lysosome (LE/Lys) compartments in mammalian cells. Necessary and sufficient to link kinesin-1 onto the Salmonella-containing vacuole (SCV) membrane. Required for centrifugal extension of lysosomal glycoprotein-rich membrane tubules, known as Salmonella-induced filaments (Sifs), away from the SCV and toward the cell periphery. Required for virulence, but not for intracellular survival and replication in phagocytic cells. This is Secreted effector protein PipB2 (pipB2) from Salmonella choleraesuis (strain SC-B67).